The following is a 356-amino-acid chain: Stomatin-like protein 2, mitochondrial (356 aa).

Residues 1–28 constitute a mitochondrion transit peptide; it reads MLARAARGTGALLLRGSLLASGRAPRRA. At serine 17 the chain carries Phosphoserine; by PKC/PRKCZ. The residue at position 124 (tyrosine 124) is a Phosphotyrosine. An N6-acetyllysine; alternate modification is found at lysine 145. Residue lysine 145 is modified to N6-succinyllysine; alternate. Residues 215 to 252 adopt a coiled-coil conformation; that stretch reads INVAEGKKQAQILASEAEKAEQINQAAGEASAVLAKAK. Lysine 233 is subject to N6-acetyllysine. The interval 321–356 is disordered; sequence KAPVPGTPDSLSSGSSRDVQGTDASLDEELDRVKMS. At threonine 327 the chain carries Phosphothreonine. Residues 329 to 343 are compositionally biased toward polar residues; that stretch reads DSLSSGSSRDVQGTD. Serine 330 bears the Phosphoserine mark.

Belongs to the band 7/mec-2 family. Forms homooligomers. Interacts with MFN2; may form heterooligomers. Interacts with CACNA2D2. Interacts with PHB1 and PHB2; recruits them to cardiolipin-enriched mitochondrial membranes and stabilizes them. Post-translationally, hyperphosphorylated at Ser-17 in some patients with monoclonal gammopathy of undetermined significance (MGUS), multiple myeloma (MM) and Waldenstrom macroglobulinemia due to impaired dephosphorylation by PP2A. Ubiquitously expressed at low levels. Expressed in lymphoid tissues (at protein level).

Its subcellular location is the cell membrane. It is found in the mitochondrion. The protein resides in the mitochondrion inner membrane. The protein localises to the mitochondrion intermembrane space. It localises to the membrane raft. Its subcellular location is the cytoplasm. It is found in the cytoskeleton. In terms of biological role, mitochondrial protein that probably regulates the biogenesis and the activity of mitochondria. Stimulates cardiolipin biosynthesis, binds cardiolipin-enriched membranes where it recruits and stabilizes some proteins including prohibitin and may therefore act in the organization of functional microdomains in mitochondrial membranes. Through regulation of the mitochondrial function may play a role into several biological processes including cell migration, cell proliferation, T-cell activation, calcium homeostasis and cellular response to stress. May play a role in calcium homeostasis through negative regulation of calcium efflux from mitochondria. Required for mitochondrial hyperfusion a pro-survival cellular response to stress which results in increased ATP production by mitochondria. May also regulate the organization of functional domains at the plasma membrane and play a role in T-cell activation through association with the T-cell receptor signaling complex and its regulation. This Homo sapiens (Human) protein is Stomatin-like protein 2, mitochondrial (STOML2).